The following is a 1533-amino-acid chain: Glycogen debranching enzyme (1533 aa).

Ser-64 is subject to Phosphoserine. Active-site residues include Asp-527, His-530, and Asp-628.

Belongs to the glycogen debranching enzyme family. In terms of assembly, monomer. Interacts with NHLRC1/malin. Post-translationally, ubiquitinated.

Its subcellular location is the cytoplasm. It carries out the reaction Transfers a segment of a (1-&gt;4)-alpha-D-glucan to a new position in an acceptor, which may be glucose or a (1-&gt;4)-alpha-D-glucan.. It catalyses the reaction Hydrolysis of (1-&gt;6)-alpha-D-glucosidic branch linkages in glycogen phosphorylase limit dextrin.. Functionally, multifunctional enzyme acting as 1,4-alpha-D-glucan:1,4-alpha-D-glucan 4-alpha-D-glycosyltransferase and amylo-1,6-glucosidase in glycogen degradation. The sequence is that of Glycogen debranching enzyme (AGL) from Canis lupus familiaris (Dog).